Reading from the N-terminus, the 72-residue chain is Translation initiation factor IF-1 (72 aa).

The 72-residue stretch at 1–72 (MAKEGNIEME…SKGRIVYRAR (72 aa)) folds into the S1-like domain.

This sequence belongs to the IF-1 family. As to quaternary structure, component of the 30S ribosomal translation pre-initiation complex which assembles on the 30S ribosome in the order IF-2 and IF-3, IF-1 and N-formylmethionyl-tRNA(fMet); mRNA recruitment can occur at any time during PIC assembly.

Its subcellular location is the cytoplasm. Functionally, one of the essential components for the initiation of protein synthesis. Stabilizes the binding of IF-2 and IF-3 on the 30S subunit to which N-formylmethionyl-tRNA(fMet) subsequently binds. Helps modulate mRNA selection, yielding the 30S pre-initiation complex (PIC). Upon addition of the 50S ribosomal subunit IF-1, IF-2 and IF-3 are released leaving the mature 70S translation initiation complex. This chain is Translation initiation factor IF-1, found in Hahella chejuensis (strain KCTC 2396).